The chain runs to 314 residues: SERTA domain-containing protein 2 (314 aa).

The 48-residue stretch at 33 to 80 folds into the SERTA domain; the sequence is YTLQRQTIFNISLMKLYNHRPLTEPSLQKTVLINNMLRRIQEELKQEG. 2 disordered regions span residues 77–119 and 181–222; these read KQEG…HPCD and PTST…SKLM. The span at 87–97 shows a compositional bias: polar residues; it reads TPSSQPTTEPS. Residues 182–193 are compositionally biased toward low complexity; that stretch reads TSTSTEAATAAT. Basic and acidic residues predominate over residues 210-221; it reads GPQESRADDSKL. The segment at 235–311 is required for transactivation activity; it reads TGFLTDLTLD…TELDHIMEVL (77 aa). The Nuclear export signal (NES) signature appears at 238–243; that stretch reads LTDLTL.

In terms of assembly, interacts with XPO1; which mediates nuclear export. Interacts with TFDP1; modulates transactivation activity of TFDP1/E2F complexes. Post-translationally, polyubiquitinated, which promotes proteasomal degradation. Expressed in adipose tissue.

The protein resides in the nucleus. It localises to the cytoplasm. Functionally, acts at E2F-responsive promoters as coregulator to integrate signals provided by PHD- and/or bromodomain-containing transcription factors. May act as coactivator as well as corepressor of E2F1-TFDP1 and E2F4-TFDP1 complexes on E2F consensus binding sites, which would activate or inhibit E2F-target genes expression. Modulates fat storage by down-regulating the expression of key genes involved in adipocyte lipolysis, thermogenesis and oxidative metabolism. The protein is SERTA domain-containing protein 2 (SERTAD2) of Homo sapiens (Human).